A 334-amino-acid chain; its full sequence is D-aspartate oxidase 2 (334 aa).

Residues D38, K39, S46, G310, and T315 each coordinate FAD.

It belongs to the DAMOX/DASOX family. Requires FAD as cofactor. In terms of tissue distribution, expressed in the intestinal cells, pharyngeal muscles, and body wall muscles in adult hermaphrodites.

It is found in the cytoplasm. The enzyme catalyses D-aspartate + O2 + H2O = oxaloacetate + H2O2 + NH4(+). It catalyses the reaction D-glutamate + O2 + H2O = H2O2 + 2-oxoglutarate + NH4(+). Its activity is regulated as follows. Inhibited by thiolactomycin. Functionally, selectively catalyzes the oxidative deamination of acidic amino acids. May play a role in the egg-laying events and early development of the worm, in addition to quality control of the germ cells. This chain is D-aspartate oxidase 2 (ddo-2), found in Caenorhabditis elegans.